We begin with the raw amino-acid sequence, 739 residues long: Phosphoribosylformylglycinamidine synthase subunit PurL (739 aa).

The active site involves His-54. Residues Tyr-57 and Lys-96 each contribute to the ATP site. Residue Glu-98 participates in Mg(2+) binding. Substrate is bound by residues 99-102 (SHNH) and Arg-121. His-100 acts as the Proton acceptor in catalysis. Position 122 (Asp-122) interacts with Mg(2+). Gln-245 is a substrate binding site. Residue Asp-273 participates in Mg(2+) binding. A substrate-binding site is contributed by 317–319 (ESQ). ATP is bound by residues Asp-500 and Gly-537. A Mg(2+)-binding site is contributed by Asn-538. Ser-540 is a binding site for substrate.

The protein belongs to the FGAMS family. As to quaternary structure, monomer. Part of the FGAM synthase complex composed of 1 PurL, 1 PurQ and 2 PurS subunits.

It localises to the cytoplasm. It catalyses the reaction N(2)-formyl-N(1)-(5-phospho-beta-D-ribosyl)glycinamide + L-glutamine + ATP + H2O = 2-formamido-N(1)-(5-O-phospho-beta-D-ribosyl)acetamidine + L-glutamate + ADP + phosphate + H(+). It participates in purine metabolism; IMP biosynthesis via de novo pathway; 5-amino-1-(5-phospho-D-ribosyl)imidazole from N(2)-formyl-N(1)-(5-phospho-D-ribosyl)glycinamide: step 1/2. Part of the phosphoribosylformylglycinamidine synthase complex involved in the purines biosynthetic pathway. Catalyzes the ATP-dependent conversion of formylglycinamide ribonucleotide (FGAR) and glutamine to yield formylglycinamidine ribonucleotide (FGAM) and glutamate. The FGAM synthase complex is composed of three subunits. PurQ produces an ammonia molecule by converting glutamine to glutamate. PurL transfers the ammonia molecule to FGAR to form FGAM in an ATP-dependent manner. PurS interacts with PurQ and PurL and is thought to assist in the transfer of the ammonia molecule from PurQ to PurL. In Bacillus anthracis (strain A0248), this protein is Phosphoribosylformylglycinamidine synthase subunit PurL.